The primary structure comprises 348 residues: Uroporphyrinogen decarboxylase (348 aa).

Substrate-binding positions include 28–32 (RQAGR), Asp78, Tyr154, Thr209, and His325.

Belongs to the uroporphyrinogen decarboxylase family. As to quaternary structure, homodimer.

It is found in the cytoplasm. It carries out the reaction uroporphyrinogen III + 4 H(+) = coproporphyrinogen III + 4 CO2. It participates in porphyrin-containing compound metabolism; protoporphyrin-IX biosynthesis; coproporphyrinogen-III from 5-aminolevulinate: step 4/4. Catalyzes the decarboxylation of four acetate groups of uroporphyrinogen-III to yield coproporphyrinogen-III. The chain is Uroporphyrinogen decarboxylase from Rhodopseudomonas palustris (strain BisB5).